Consider the following 352-residue polypeptide: Photosystem II D2 protein (352 aa).

The chain crosses the membrane as a helical span at residues 40–60 (CAYLALGGWLTGTTFVTSWYT). His-117 is a chlorophyll a binding site. The chain crosses the membrane as a helical span at residues 124 to 140 (GFMLRQFEIARLVGVRP). Pheophytin a-binding residues include Gln-129 and Asn-142. Residues 152–165 (VFVSVFLIYPLGQS) traverse the membrane as a helical segment. His-197 is a binding site for chlorophyll a. The chain crosses the membrane as a helical span at residues 207-227 (GALLCAIHGATVENTLYKDGE). The a plastoquinone site is built by His-214 and Phe-261. His-214 contacts Fe cation. Residue His-268 coordinates Fe cation. Residues 278 to 294 (GLWMSSIGVVGLALNLR) traverse the membrane as a helical segment.

It belongs to the reaction center PufL/M/PsbA/D family. PSII is composed of 1 copy each of membrane proteins PsbA, PsbB, PsbC, PsbD, PsbE, PsbF, PsbH, PsbI, PsbJ, PsbK, PsbL, PsbM, PsbT, PsbX, PsbY, PsbZ, Psb30/Ycf12, peripheral proteins PsbO, CyanoQ (PsbQ), PsbU, PsbV and a large number of cofactors. It forms dimeric complexes. The D1/D2 heterodimer binds P680, chlorophylls that are the primary electron donor of PSII, and subsequent electron acceptors. It shares a non-heme iron and each subunit binds pheophytin, quinone, additional chlorophylls, carotenoids and lipids. There is also a Cl(-1) ion associated with D1 and D2, which is required for oxygen evolution. The PSII complex binds additional chlorophylls, carotenoids and specific lipids. is required as a cofactor.

It is found in the cellular thylakoid membrane. It catalyses the reaction 2 a plastoquinone + 4 hnu + 2 H2O = 2 a plastoquinol + O2. Its function is as follows. Photosystem II (PSII) is a light-driven water:plastoquinone oxidoreductase that uses light energy to abstract electrons from H(2)O, generating O(2) and a proton gradient subsequently used for ATP formation. It consists of a core antenna complex that captures photons, and an electron transfer chain that converts photonic excitation into a charge separation. The D1/D2 (PsbA/PsbD) reaction center heterodimer binds P680, the primary electron donor of PSII as well as several subsequent electron acceptors. D2 is needed for assembly of a stable PSII complex. The protein is Photosystem II D2 protein of Synechococcus sp. (strain JA-3-3Ab) (Cyanobacteria bacterium Yellowstone A-Prime).